A 474-amino-acid polypeptide reads, in one-letter code: Probable CAAX prenyl protease 1 (474 aa).

The next 3 helical transmembrane spans lie at 103 to 123 (SWFS…IIKY), 196 to 216 (IFVI…SVVV), and 230 to 250 (FIMY…TIAP). Position 332 (H332) interacts with Zn(2+). Residue E333 is part of the active site. Position 336 (H336) interacts with Zn(2+). 2 helical membrane-spanning segments follow: residues 344-364 (INTI…AAFI) and 381-401 (VIVG…ILTF). E411 is a Zn(2+) binding site. The active-site Proton donor is D415.

Belongs to the peptidase M48A family. Requires Zn(2+) as cofactor.

It is found in the endoplasmic reticulum membrane. The enzyme catalyses Hydrolyzes the peptide bond -P2-(S-farnesyl or geranylgeranyl)C-P1'-P2'-P3'-COOH where P1' and P2' are amino acids with aliphatic side chains and P3' is any C-terminal residue.. In terms of biological role, proteolytically removes the C-terminal three residues of farnesylated proteins. This is Probable CAAX prenyl protease 1 from Schizosaccharomyces pombe (strain 972 / ATCC 24843) (Fission yeast).